We begin with the raw amino-acid sequence, 153 residues long: Small ribosomal subunit protein uS13 (153 aa).

Residues 134 to 153 are disordered; it reads GQRTKSNGRRGRSMGVSRKK.

Belongs to the universal ribosomal protein uS13 family.

It localises to the cytoplasm. In terms of biological role, located at the top of the head of the 40S subunit, it contacts several helices of the 18S rRNA. The sequence is that of Small ribosomal subunit protein uS13 (RPS18) from Encephalitozoon cuniculi (strain GB-M1) (Microsporidian parasite).